The primary structure comprises 452 residues: MMITLRKLPLAVAVAAGVMSAQAMAVDFHGYARSGIGWTGSGGEQQCFQVTGAQSKYRLGNECETYAELKLGQEVWKEGDKSFYFDTNVAYSVNQQNDWESTDPAFREANVQGKNLIEWLPGSTIWAGKRFYQRHDVHMIDFYYWDISGPGAGIENIDLGFGKLSLAATRSTEAGGSYTFSSQNIYDEVKDTANDVFDVRLAGLQTNPDGVLELGVDYGRANTTDGYKLADGASKDGWMFTAEHTQSMLKGYNKFVVQYATDAMTTQGKGQARGSDGSSSFTEELPDGTKINYANKVINNNGDMWRILDHGAISLGDKWDLMYVGMYQNIDWDNNLGTEWWTVGVRPMYKWTPIMSTLLEVGYDNVKSQQTGDRNNQYKITLAQQWQAGDSIWSRPAIRIFATYAKWDEKWGYIKDGDNISRYAAATNSGISTNSRGDSDEWTFGAQMEIWW.

Positions 1 to 25 (MMITLRKLPLAVAVAAGVMSAQAMA) are cleaved as a signal peptide.

This sequence belongs to the porin LamB (TC 1.B.3) family. As to quaternary structure, homotrimer formed of three 18-stranded antiparallel beta-barrels, containing three independent channels.

The protein localises to the cell outer membrane. The catalysed reaction is beta-maltose(in) = beta-maltose(out). Functionally, involved in the transport of maltose and maltodextrins. This is Maltoporin from Salmonella newport (strain SL254).